Consider the following 336-residue polypeptide: Ornithine carbamoyltransferase, catabolic (336 aa).

Carbamoyl phosphate-binding positions include 57–60 (STRT), Gln84, Arg108, and 135–138 (HPTQ). Residues Asn168, Asp232, and 236 to 237 (SM) each bind L-ornithine. Carbamoyl phosphate contacts are provided by residues 274-275 (CL) and Arg321.

This sequence belongs to the aspartate/ornithine carbamoyltransferase superfamily. OTCase family.

It is found in the cytoplasm. The enzyme catalyses carbamoyl phosphate + L-ornithine = L-citrulline + phosphate + H(+). It functions in the pathway amino-acid degradation; L-arginine degradation via ADI pathway; carbamoyl phosphate from L-arginine: step 2/2. Its function is as follows. Reversibly catalyzes the transfer of the carbamoyl group from carbamoyl phosphate (CP) to the N(epsilon) atom of ornithine (ORN) to produce L-citrulline. This Burkholderia mallei (strain ATCC 23344) protein is Ornithine carbamoyltransferase, catabolic.